The sequence spans 1379 residues: DNA-directed RNA polymerase subunit beta (1379 aa).

The protein belongs to the RNA polymerase beta chain family. As to quaternary structure, the RNAP catalytic core consists of 2 alpha, 1 beta, 1 beta' and 1 omega subunit. When a sigma factor is associated with the core the holoenzyme is formed, which can initiate transcription.

It catalyses the reaction RNA(n) + a ribonucleoside 5'-triphosphate = RNA(n+1) + diphosphate. Its function is as follows. DNA-dependent RNA polymerase catalyzes the transcription of DNA into RNA using the four ribonucleoside triphosphates as substrates. The chain is DNA-directed RNA polymerase subunit beta from Rhizobium etli (strain ATCC 51251 / DSM 11541 / JCM 21823 / NBRC 15573 / CFN 42).